Reading from the N-terminus, the 232-residue chain is MSKLTKNQKLALGKIEAGKAYTLKEASALVKEITTTKFDASVDVDVRLGVDPRKANQMVRGVVSLPHGTGKQVRVLALCTPDKEAEATAAGADYVGLDEYINKIKGGWTDIDVIITMPSIMGKIGALGRVLGPRGLMPNPKSGTVTNEIGNAVKEVKQGKIDFKVDKSGIVHTSVGKVSFTPEQIRDNAKEFISTLIKLKPTAAKGAYIKSIYLSSTMSAGIKIDPKSVEEN.

Belongs to the universal ribosomal protein uL1 family. As to quaternary structure, part of the 50S ribosomal subunit.

Functionally, binds directly to 23S rRNA. The L1 stalk is quite mobile in the ribosome, and is involved in E site tRNA release. In terms of biological role, protein L1 is also a translational repressor protein, it controls the translation of the L11 operon by binding to its mRNA. The polypeptide is Large ribosomal subunit protein uL1 (Parabacteroides distasonis (strain ATCC 8503 / DSM 20701 / CIP 104284 / JCM 5825 / NCTC 11152)).